Consider the following 211-residue polypeptide: Thymidylate kinase (211 aa).

10-17 (GVEGCGKT) provides a ligand contact to ATP.

The protein belongs to the thymidylate kinase family.

It carries out the reaction dTMP + ATP = dTDP + ADP. Its function is as follows. Phosphorylation of dTMP to form dTDP in both de novo and salvage pathways of dTTP synthesis. This Nostoc punctiforme (strain ATCC 29133 / PCC 73102) protein is Thymidylate kinase.